We begin with the raw amino-acid sequence, 351 residues long: Uroporphyrinogen decarboxylase (351 aa).

Substrate-binding positions include arginine 27–arginine 31, aspartate 77, tyrosine 154, threonine 209, and histidine 327.

The protein belongs to the uroporphyrinogen decarboxylase family. In terms of assembly, homodimer.

The protein localises to the cytoplasm. It carries out the reaction uroporphyrinogen III + 4 H(+) = coproporphyrinogen III + 4 CO2. Its pathway is porphyrin-containing compound metabolism; protoporphyrin-IX biosynthesis; coproporphyrinogen-III from 5-aminolevulinate: step 4/4. In terms of biological role, catalyzes the decarboxylation of four acetate groups of uroporphyrinogen-III to yield coproporphyrinogen-III. In Thioalkalivibrio sulfidiphilus (strain HL-EbGR7), this protein is Uroporphyrinogen decarboxylase.